Here is a 667-residue protein sequence, read N- to C-terminus: UvrABC system protein B (667 aa).

The region spanning 25–180 (DSLQNQHRFQ…LLRALVSVQY (156 aa)) is the Helicase ATP-binding domain. 38 to 45 (GATGTGKT) serves as a coordination point for ATP. Positions 91–114 (YYDYYQPEAYIPVSDTYIEKSSSI) match the Beta-hairpin motif. Residues 429 to 595 (QVDDLLGEIK…PIVKRSSNSI (167 aa)) enclose the Helicase C-terminal domain. One can recognise a UVR domain in the interval 626–661 (PELIQQLEAQMKEAAKNLEFESAAKYRDRIKQLRDK).

This sequence belongs to the UvrB family. In terms of assembly, forms a heterotetramer with UvrA during the search for lesions. Interacts with UvrC in an incision complex.

The protein resides in the cytoplasm. In terms of biological role, the UvrABC repair system catalyzes the recognition and processing of DNA lesions. A damage recognition complex composed of 2 UvrA and 2 UvrB subunits scans DNA for abnormalities. Upon binding of the UvrA(2)B(2) complex to a putative damaged site, the DNA wraps around one UvrB monomer. DNA wrap is dependent on ATP binding by UvrB and probably causes local melting of the DNA helix, facilitating insertion of UvrB beta-hairpin between the DNA strands. Then UvrB probes one DNA strand for the presence of a lesion. If a lesion is found the UvrA subunits dissociate and the UvrB-DNA preincision complex is formed. This complex is subsequently bound by UvrC and the second UvrB is released. If no lesion is found, the DNA wraps around the other UvrB subunit that will check the other stand for damage. The polypeptide is UvrABC system protein B (Microcystis aeruginosa (strain NIES-843 / IAM M-2473)).